A 234-amino-acid chain; its full sequence is Large ribosomal subunit protein uL1 (234 aa).

This sequence belongs to the universal ribosomal protein uL1 family. In terms of assembly, part of the 50S ribosomal subunit.

In terms of biological role, binds directly to 23S rRNA. The L1 stalk is quite mobile in the ribosome, and is involved in E site tRNA release. Protein L1 is also a translational repressor protein, it controls the translation of the L11 operon by binding to its mRNA. The sequence is that of Large ribosomal subunit protein uL1 from Salmonella gallinarum (strain 287/91 / NCTC 13346).